Reading from the N-terminus, the 82-residue chain is Small ribosomal subunit protein bS16 (82 aa).

It belongs to the bacterial ribosomal protein bS16 family.

The sequence is that of Small ribosomal subunit protein bS16 from Blochmanniella floridana.